Consider the following 449-residue polypeptide: Gamma-aminobutyric acid receptor subunit delta (449 aa).

An N-terminal signal peptide occupies residues 1-24 (MDVLGWLLLPLLLLCTQPHHGARA). The Extracellular segment spans residues 25–251 (MNDIGDYVGS…QLRRNRGVYI (227 aa)). N-linked (GlcNAc...) asparagine glycans are attached at residues N103 and N106. A disulfide bridge connects residues C164 and C178. Residues 252 to 271 (IQSYMPSVLLVAMSWVSFWI) traverse the membrane as a helical segment. Residues 272 to 275 (SQAA) are Cytoplasmic-facing. Residues 276–298 (VPARVSLGITTVLTMTTLMVSAR) traverse the membrane as a helical segment. Residues 299–308 (SSLPRASAIK) are Extracellular-facing. The chain crosses the membrane as a helical span at residues 309–331 (ALDVYFWICYVFVFAALVEYAFA). Residues 332 to 423 (HFNADYRKKR…SRLKPIDADT (92 aa)) are Cytoplasmic-facing. At S390 the chain carries Phosphoserine. Residues 424–446 (IDIYARAVFPAAFAAVNIIYWAA) traverse the membrane as a helical segment. Residues 447–449 (YTM) are Extracellular-facing.

Belongs to the ligand-gated ion channel (TC 1.A.9) family. Gamma-aminobutyric acid receptor (TC 1.A.9.5) subfamily. GABRD sub-subfamily. In terms of assembly, heteropentamer, formed by a combination of alpha (GABRA1-6), beta (GABRB1-3), gamma (GABRG1-3), delta (GABRD), epsilon (GABRE), rho (GABRR1-3), pi (GABRP) and theta (GABRQ) chains, each subunit exhibiting distinct physiological and pharmacological properties. In terms of tissue distribution, found in the brain, in cerebellar granule cells. Expressed in lungs, in alveolar epithelium.

The protein resides in the cell membrane. It catalyses the reaction chloride(in) = chloride(out). In terms of biological role, delta subunit of the heteropentameric ligand-gated chloride channel gated by gamma-aminobutyric acid (GABA), a major inhibitory neurotransmitter in the brain. GABA-gated chloride channels, also named GABA(A) receptors (GABAAR), consist of five subunits arranged around a central pore and contain GABA active binding site(s) located at the alpha and beta subunit interface(s). When activated by GABA, GABAARs selectively allow the flow of chloride anions across the cell membrane down their electrochemical gradient. GABAARs containing delta/GABRD subunits are predominantly expressed and located in extrasynaptic or perisynaptic positions on hippocampus and cerebellar granule cells, and contribute to the tonic GABAergic inhibition. GABAAR containing alpha-4-beta-3-delta subunits can simultaneously bind GABA and histamine where histamine binds at the interface of two neighboring beta subunits, which may be involved in the regulation of sleep and wakefulness. The polypeptide is Gamma-aminobutyric acid receptor subunit delta (Rattus norvegicus (Rat)).